The primary structure comprises 434 residues: Anaerobic glycerol-3-phosphate dehydrogenase subunit B (434 aa).

This sequence belongs to the anaerobic G-3-P dehydrogenase subunit B family. Composed of a catalytic GlpA/B dimer and of membrane bound GlpC. FMN serves as cofactor.

It carries out the reaction a quinone + sn-glycerol 3-phosphate = dihydroxyacetone phosphate + a quinol. It participates in polyol metabolism; glycerol degradation via glycerol kinase pathway; glycerone phosphate from sn-glycerol 3-phosphate (anaerobic route): step 1/1. Functionally, conversion of glycerol 3-phosphate to dihydroxyacetone. Uses fumarate or nitrate as electron acceptor. This chain is Anaerobic glycerol-3-phosphate dehydrogenase subunit B, found in Histophilus somni (strain 2336) (Haemophilus somnus).